The chain runs to 357 residues: UPF0744 protein C106.03 (357 aa).

S282 is modified (phosphoserine).

Belongs to the UPF0744 family.

It localises to the cytoplasm. The chain is UPF0744 protein C106.03 from Schizosaccharomyces pombe (strain 972 / ATCC 24843) (Fission yeast).